A 204-amino-acid polypeptide reads, in one-letter code: Signal peptidase I (204 aa).

Over 1-10 (MNSFKNFLKE) the chain is Cytoplasmic. The chain crosses the membrane as a helical span at residues 11-30 (WGLFLLILSLLALSRIFFWS). Residues 31-204 (NVRVEGHSMD…LWPITRIGTF (174 aa)) lie on the Extracellular side of the membrane. Active-site residues include serine 38 and lysine 76.

Belongs to the peptidase S26 family.

The protein localises to the cell membrane. It catalyses the reaction Cleavage of hydrophobic, N-terminal signal or leader sequences from secreted and periplasmic proteins.. This Streptococcus pneumoniae serotype 4 (strain ATCC BAA-334 / TIGR4) protein is Signal peptidase I (lepB).